A 206-amino-acid polypeptide reads, in one-letter code: GTP cyclohydrolase 1 (206 aa).

The Zn(2+) site is built by Cys-95, His-98, and Cys-166.

Belongs to the GTP cyclohydrolase I family. In terms of assembly, toroid-shaped homodecamer, composed of two pentamers of five dimers.

It catalyses the reaction GTP + H2O = 7,8-dihydroneopterin 3'-triphosphate + formate + H(+). The protein operates within cofactor biosynthesis; 7,8-dihydroneopterin triphosphate biosynthesis; 7,8-dihydroneopterin triphosphate from GTP: step 1/1. The sequence is that of GTP cyclohydrolase 1 from Bartonella quintana (strain Toulouse) (Rochalimaea quintana).